Reading from the N-terminus, the 155-residue chain is Endoribonuclease YbeY (155 aa).

His-114, His-118, and His-124 together coordinate Zn(2+).

This sequence belongs to the endoribonuclease YbeY family. The cofactor is Zn(2+).

It is found in the cytoplasm. In terms of biological role, single strand-specific metallo-endoribonuclease involved in late-stage 70S ribosome quality control and in maturation of the 3' terminus of the 16S rRNA. The polypeptide is Endoribonuclease YbeY (Buchnera aphidicola subsp. Acyrthosiphon pisum (strain APS) (Acyrthosiphon pisum symbiotic bacterium)).